The following is a 159-amino-acid chain: Transcriptional repressor NrdR (159 aa).

Residues Cys-3 to Cys-34 fold into a zinc finger. Residues Ile-49–Asp-139 form the ATP-cone domain.

It belongs to the NrdR family. The cofactor is Zn(2+).

Its function is as follows. Negatively regulates transcription of bacterial ribonucleotide reductase nrd genes and operons by binding to NrdR-boxes. This Hyphomonas neptunium (strain ATCC 15444) protein is Transcriptional repressor NrdR.